Here is a 227-residue protein sequence, read N- to C-terminus: Response regulator protein TodT (227 aa).

The Response regulatory domain maps to 28-142; sequence VIYILDDDNA…ELLGAIRAAL (115 aa). The residue at position 77 (D77) is a 4-aspartylphosphate. The HTH luxR-type domain maps to 158-223; that stretch reads LKENYESLSK…DLVRVTERLK (66 aa). Residues 182–201 constitute a DNA-binding region (H-T-H motif); it reads NKQTALELDISEATVKVHRH.

Phosphorylated by TodS.

It localises to the cytoplasm. In terms of biological role, member of the two-component regulatory system TodS/TodT involved in the regulation of toluene degradation. Phosphorylated TodT activates transcription of the tod operon (todXFC1C2BADEGIH). Binds specifically to a 6-bp palindromic DNA structure in the tod promoter region. The protein is Response regulator protein TodT (todT) of Pseudomonas putida (strain ATCC 700007 / DSM 6899 / JCM 31910 / BCRC 17059 / LMG 24140 / F1).